The primary structure comprises 705 residues: Frizzled-4 (705 aa).

An N-terminal signal peptide occupies residues 1 to 22; it reads MKPTCILCLLVVILLHPRISKS. Positions 21-37 are enriched in low complexity; it reads KSSTSGNPSASSSSSSP. Positions 21-40 are disordered; it reads KSSTSGNPSASSSSSSPPEI. The Extracellular segment spans residues 23–233; that stretch reads STSGNPSASS…FTPAEKHLAE (211 aa). The region spanning 41–163 is the FZ domain; the sequence is PAFRQCETIR…NNHETMCMEG (123 aa). 5 disulfide bridges follow: Cys46-Cys107, Cys54-Cys100, Cys91-Cys130, Cys119-Cys160, and Cys123-Cys147. Asn60 is a glycosylation site (N-linked (GlcNAc...) asparagine). Residues 234–254 form a helical membrane-spanning segment; the sequence is IWVSTWAYAALGLALVATVCL. At 255 to 270 the chain is on the cytoplasmic side; it reads LASDGSRLASAKWSRL. Residues 271 to 291 traverse the membrane as a helical segment; sequence LSPLIWCHNMVTLGWAVRFMV. The Extracellular segment spans residues 292-322; the sequence is GRTGTACGTDPQAPNESLLTVDGLSNASCAS. N-linked (GlcNAc...) asparagine glycans are attached at residues Asn306 and Asn317. The helical transmembrane segment at 323 to 343 threads the bilayer; that stretch reads VFLMRYYFGMAACAWWAVLCL. At 344-386 the chain is on the cytoplasmic side; that stretch reads GWHRDIRRHSPDSKGHVVIPSNFGGSPAKRNSAKTAQQDLTQN. A helical transmembrane segment spans residues 387-407; the sequence is NFVCFVAWGLPAFQTSAVIVA. Residues 408-430 are Extracellular-facing; it reads RFVDADELLGACFVGNQSDKALQ. An N-linked (GlcNAc...) asparagine glycan is attached at Asn423. Residues 431 to 451 form a helical membrane-spanning segment; sequence ILVATPVFCYWIFGSMNLISG. Topologically, residues 452-483 are cytoplasmic; the sequence is YLVHCRTKEILRNSNALSVQQQLQQLSAHSSS. The chain crosses the membrane as a helical span at residues 484 to 504; sequence GIGIFLFIYGLACAMLLLAVI. Residues 505-529 are Extracellular-facing; that stretch reads YEFANIDVWLGSGDTNTPLWPFLLR. A helical membrane pass occupies residues 530–550; the sequence is AFMELMLGICCFAWVLGPSIS. Over 551 to 705 the chain is Cytoplasmic; that stretch reads TLYKRQVSNG…LQQYGNETLL (155 aa). Residues 635–681 are disordered; that stretch reads RSVHHQQRHSPHHHHHQQQQHHQFHPHHNHQHHSTSSHRLYYPPGSY. Positions 636–670 are enriched in basic residues; that stretch reads SVHHQQRHSPHHHHHQQQQHHQFHPHHNHQHHSTS. The PDZ-binding signature appears at 703–705; it reads TLL.

It belongs to the G-protein coupled receptor Fz/Smo family.

The protein resides in the membrane. Receptor for Wnt proteins. Most of frizzled receptors are coupled to the beta-catenin canonical signaling pathway, which leads to the activation of disheveled proteins, inhibition of GSK-3 kinase, nuclear accumulation of beta-catenin and activation of Wnt target genes. A second signaling pathway involving PKC and calcium fluxes has been seen for some family members, but it is not yet clear if it represents a distinct pathway or if it can be integrated in the canonical pathway, as PKC seems to be required for Wnt-mediated inactivation of GSK-3 kinase. Both pathways seem to involve interactions with G-proteins. May be involved in transduction and intercellular transmission of polarity information during tissue morphogenesis and/or in differentiated tissues. Required to coordinate the cytoskeletons of epidermal cells to produce a parallel array of cuticular hairs and bristles. This chain is Frizzled-4 (fz4), found in Drosophila melanogaster (Fruit fly).